Here is a 504-residue protein sequence, read N- to C-terminus: Nuclear hormone receptor family member nhr-80 (504 aa).

The segment at residues 27–103 (STRCLICSAQ…NGMKPGGVQP (77 aa)) is a DNA-binding region (nuclear receptor). 2 consecutive NR C4-type zinc fingers follow at residues 30 to 50 (CLIC…CSAC) and 66 to 86 (CITG…CRSC). Residues 177–192 (SSSTSFSASTTTNYST) are compositionally biased toward low complexity. The segment at 177 to 199 (SSSTSFSASTTTNYSTPGPSPMA) is disordered. The region spanning 214 to 466 (EEMKLGERRR…KLVLQLLNLD (253 aa)) is the NR LBD domain. Residues 455 to 466 (LDKLVLQLLNLD) form an AF-2 region.

This sequence belongs to the nuclear hormone receptor family. Interacts with nuclear hormone receptor nhr-49; the interaction is direct. As to expression, expressed in the intestine and in some head and tail neurons, as well as the ventral nerve cord.

Its subcellular location is the nucleus. Its function is as follows. Transcription factor. Binds to regulatory elements and regulates transcription of target genes, including acyltransferase dgat-2. As part of a lysosome-to-nucleus retrograde lipid signaling pathway, acts as a direct nuclear receptor of oleoylethanolamide (OEA) and, acting in concert with nuclear hormone receptor nhr-49, activates the transcription of genes promoting longevity and mitochondrial beta-oxidation. Required to modulate expression of delta-9 fatty acid desaturases, thereby regulating lipid metabolism; in some contexts, acting in concert with nhr-49. Involved in modulation of lipid metabolism in response to the citrate-induced mitochondrial unfolded protein response (mtUPR), acting downstream of transcription factor dve-1 and ubiquitin-like protein 5. Plays a role in modulating mitochondrial morphology and function. Involved in positively modulating life-span in a germline-dependent manner, acting in concert with nuclear hormone receptor daf-12. Plays a role in transgenerational lipid accumulation in response to a high-fat diet. This chain is Nuclear hormone receptor family member nhr-80, found in Caenorhabditis elegans.